We begin with the raw amino-acid sequence, 857 residues long: KH domain-containing protein HEN4 (857 aa).

A compositionally biased stretch (basic and acidic residues) spans 1-15; sequence MERNSVKFHAEKRSG. The segment at 1–27 is disordered; the sequence is MERNSVKFHAEKRSGAFDPGSGFGSSK. KH domains are found at residues 46–110, 149–217, 451–521, and 541–610; these read HAAF…KLGA, TVVC…LVSI, DVVF…IMLI, and SITA…IFHI. Residues 644–755 are disordered; sequence SDNPLSIGSH…RGLSDASGGL (112 aa). Polar residues-rich tracts occupy residues 645 to 665 and 673 to 688; these read DNPL…NSSS and SFLS…SRSV. Basic and acidic residues predominate over residues 718–730; that stretch reads FTMDHSDNSHHLT. Low complexity predominate over residues 746–755; it reads RGLSDASGGL. A KH 5 domain is found at 775–839; the sequence is NTTVEIRVPA…DQTQAAQNLL (65 aa).

In terms of assembly, interacts with HUA1. Interacts with FLK and PEP.

Its subcellular location is the nucleus speckle. Functionally, functions in floral reproductive organ identity in the third whorl and floral determinacy specification by specifically promoting the processing of AGAMOUS (AG) pre-mRNA. Functions in association with HUA1 and HUA2. The protein is KH domain-containing protein HEN4 of Arabidopsis thaliana (Mouse-ear cress).